We begin with the raw amino-acid sequence, 218 residues long: Claudin-3 (218 aa).

Residues 1–8 (MSMGLEIA) lie on the Cytoplasmic side of the membrane. A helical transmembrane segment spans residues 9-29 (GTSLAVLGWLSTIVCCALPMW). At 30–80 (RVTAFIGSSIITAQITWEGLWMNCVVQSTGQMQCKVYDSLLALPQDLQAAR) the chain is on the extracellular side. A helical transmembrane segment spans residues 81-101 (ALIVVSILLAAFGLLVALVGA). At 102-115 (QCTNCVQDDTAKAK) the chain is on the cytoplasmic side. A helical transmembrane segment spans residues 116 to 136 (ITIVAGVLFLLAALLTLVPVS). The Extracellular portion of the chain corresponds to 137–159 (WSANTIIRDFYNPLVPDAQKREM). The chain crosses the membrane as a helical span at residues 160–180 (GAGLYVGWAAAALQLLGGALL). Residues 181–218 (CCSCPPRDKKYAPTKIVYSAPRSAGPGTSTAYDRKDYV) are Cytoplasmic-facing. The residue at position 198 (Y198) is a Phosphotyrosine. Phosphoserine occurs at positions 199 and 209. Residues 217–218 (YV) are interactions with TJP1, TJP2 and TJP3.

The protein belongs to the claudin family. In terms of assembly, can form homo- and heteropolymers with other CLDN. Homopolymers interact with CLDN1 and CLDN2 homopolymers. Interacts in cis (within the same plasma membrane) with CLDN19. Directly interacts with TJP1/ZO-1, TJP2/ZO-2 and TJP3/ZO-3.

It localises to the cell junction. It is found in the tight junction. The protein resides in the cell membrane. In terms of biological role, plays a major role in tight junction-specific obliteration of the intercellular space, through calcium-independent cell-adhesion activity. This chain is Claudin-3 (CLDN3), found in Canis lupus familiaris (Dog).